A 504-amino-acid chain; its full sequence is Galactokinase (504 aa).

4 residues coordinate alpha-D-galactose: arginine 47, aspartate 53, histidine 54, and aspartate 56. ATP-binding residues include glycine 150, glycine 152, serine 154, and serine 155. 2 residues coordinate alpha-D-galactose: asparagine 196 and aspartate 200. The active-site Proton acceptor is the aspartate 200. Residues serine 244, asparagine 245, and lysine 246 each contribute to the ATP site. Tyrosine 254 is a binding site for alpha-D-galactose.

It belongs to the GHMP kinase family. GalK subfamily.

It catalyses the reaction alpha-D-galactose + ATP = alpha-D-galactose 1-phosphate + ADP + H(+). It functions in the pathway carbohydrate metabolism; galactose metabolism. Its function is as follows. Galactokinase is a key enzyme in the galactose metabolism where it catalyzes the conversion of alpha-D-galactose to galactose 1-phosphate. Can also induce the transcription of the gal genes in response to the organism being challenged with galactose as the sole source of carbon. The protein is Galactokinase of Candida parapsilosis (Yeast).